The sequence spans 263 residues: 4-hydroxy-2-oxo-heptane-1,7-dioate aldolase (263 aa).

Residue histidine 45 is the Proton acceptor of the active site. Glutamine 147 contacts substrate. Glutamate 149 serves as a coordination point for a divalent metal cation. Alanine 174 and aspartate 175 together coordinate substrate. Aspartate 175 serves as a coordination point for a divalent metal cation.

It belongs to the HpcH/HpaI aldolase family. In terms of assembly, homohexamer; trimer of dimers. It depends on a divalent metal cation as a cofactor.

It carries out the reaction 4-hydroxy-2-oxoheptanedioate = succinate semialdehyde + pyruvate. It participates in aromatic compound metabolism; 4-hydroxyphenylacetate degradation; pyruvate and succinate semialdehyde from 4-hydroxyphenylacetate: step 7/7. In terms of biological role, catalyzes the reversible retro-aldol cleavage of 4-hydroxy-2-ketoheptane-1,7-dioate (HKHD) to pyruvate and succinic semialdehyde. This is 4-hydroxy-2-oxo-heptane-1,7-dioate aldolase from Salmonella choleraesuis (strain SC-B67).